Here is a 313-residue protein sequence, read N- to C-terminus: Ornithine carbamoyltransferase (313 aa).

Carbamoyl phosphate is bound by residues S61–T64, Q88, R112, and H139–Q142. L-ornithine is bound by residues N170, D228, and S232–M233. Carbamoyl phosphate-binding positions include C268–L269 and R296.

The protein belongs to the aspartate/ornithine carbamoyltransferase superfamily. OTCase family.

It is found in the cytoplasm. The enzyme catalyses carbamoyl phosphate + L-ornithine = L-citrulline + phosphate + H(+). The protein operates within amino-acid biosynthesis; L-arginine biosynthesis; L-arginine from L-ornithine and carbamoyl phosphate: step 1/3. Reversibly catalyzes the transfer of the carbamoyl group from carbamoyl phosphate (CP) to the N(epsilon) atom of ornithine (ORN) to produce L-citrulline. This is Ornithine carbamoyltransferase from Bordetella avium (strain 197N).